Reading from the N-terminus, the 541-residue chain is GPI alpha-1,2-mannosyltransferase 3 (541 aa).

Asn18 carries an N-linked (GlcNAc...) asparagine glycan. Helical transmembrane passes span 53-73 (LVLF…TSFV), 126-146 (VHLL…IADL), 182-202 (LTNT…PLEG), 214-234 (LVAL…PLLF), 245-265 (DLIL…SLII), 305-325 (GFPA…FLAP), 330-350 (IFLV…HKEF), 352-372 (FIYP…NNLK), and 377-397 (PALS…GLVH). Asn417 carries N-linked (GlcNAc...) asparagine glycosylation.

Belongs to the glycosyltransferase 22 family. PIGB subfamily.

It is found in the endoplasmic reticulum membrane. Its pathway is glycolipid biosynthesis; glycosylphosphatidylinositol-anchor biosynthesis. In terms of biological role, alpha-1,2-mannosyltransferase that catalyzes the transfer of the third mannose, via an alpha-1,2 bond, from a dolichol-phosphate-mannose (Dol-P-Man) to an alpha-D-Man-(1-&gt;6)-2-PEtn-alpha-D-Man-(1-&gt;4)-alpha-D-GlcN-(1-&gt;6)-(1-radyl,2-acyl-sn-glycero-3-phospho)-2-acyl-inositol intermediate to generate an alpha-D-Man-(1-&gt;2)-alpha-D-Man-(1-&gt;6)-2-PEtn-alpha-D-Man-(1-&gt;4)-alpha-D-GlcN-(1-&gt;6)-(1-radyl,2-acyl-sn-glycero-3-phospho)-2-acyl-inositol (also termed H6) and participates in the nineth step of the glycosylphosphatidylinositol-anchor biosynthesis. May also add the third mannose to an alpha-D-Man-(1-&gt;6)-alpha-D-Man-(1-&gt;4)-alpha-D-GlcN-(1-&gt;6)-(1-radyl,2-acyl-sn-glycero-3-phospho)-2-acyl-inositol (also termed H3) intermediate generating an alpha-D-Man-(1-&gt;2)-alpha-D-Man-(1-&gt;6)-alpha-D-Man-(1-&gt;4)-alpha-D-GlcN-(1-&gt;6)-(1-radyl,2-acyl-sn-glycero-3-phospho)-2-acyl-inositol (also termed H4). The protein is GPI alpha-1,2-mannosyltransferase 3 of Bos taurus (Bovine).